The primary structure comprises 115 residues: Type 3 secretion system chaperone PscG (115 aa).

Belongs to the YscG family. As to quaternary structure, forms a stable heterotrimeric complex with PscE and PscF/SctF in the cytoplasm. Co-stabilized by PscE.

It localises to the cytoplasm. In terms of biological role, chaperone of the type III secretion system (T3SS), also called injectisome, which is used to inject bacterial effector proteins into eukaryotic host cells, facilitating the establishment and dissemination of infection. Along with PscE, prevents premature polymerization of the PscF/SctF needle protein within the cytoplasm. Required for type III secretion needle assembly. Also required for cytotoxicity by influencing PscF/SctF levels. In Pseudomonas aeruginosa (strain ATCC 15692 / DSM 22644 / CIP 104116 / JCM 14847 / LMG 12228 / 1C / PRS 101 / PAO1), this protein is Type 3 secretion system chaperone PscG (pscG).